The following is a 181-amino-acid chain: ATP-dependent protease subunit HslV (181 aa).

The active site involves Thr7. Positions 166, 169, and 172 each coordinate Na(+).

Belongs to the peptidase T1B family. HslV subfamily. A double ring-shaped homohexamer of HslV is capped on each side by a ring-shaped HslU homohexamer. The assembly of the HslU/HslV complex is dependent on binding of ATP.

Its subcellular location is the cytoplasm. The catalysed reaction is ATP-dependent cleavage of peptide bonds with broad specificity.. Its activity is regulated as follows. Allosterically activated by HslU binding. Its function is as follows. Protease subunit of a proteasome-like degradation complex believed to be a general protein degrading machinery. This is ATP-dependent protease subunit HslV from Acidovorax ebreus (strain TPSY) (Diaphorobacter sp. (strain TPSY)).